We begin with the raw amino-acid sequence, 217 residues long: D-methionine transport system permease protein MetI (217 aa).

An ABC transmembrane type-1 domain is found at 13 to 204; sequence VWETLMMTFV…LLVILVYLIQ (192 aa). The next 5 helical transmembrane spans lie at 20 to 40, 58 to 78, 81 to 101, 152 to 172, and 186 to 206; these read TFVSGFFGFVLGLPVGVLLYV, GVVNIFRSIPFIILLVWMIPF, MIVGTSIGLQAAIVPLTVGAA, ITLITLVGYSAMGGAVGAGGL, and ATVMNTVLVLLVILVYLIQLS.

This sequence belongs to the binding-protein-dependent transport system permease family. CysTW subfamily.

It is found in the cell inner membrane. Its function is as follows. Part of the binding-protein-dependent transport system for D-methionine and the toxic methionine analog alpha-methyl-methionine. Probably responsible for the translocation of the substrate across the membrane. This is D-methionine transport system permease protein MetI (metI) from Yersinia pestis.